The primary structure comprises 427 residues: Septin-6 (427 aa).

A2 bears the N-acetylalanine mark. S27 bears the Phosphoserine mark. The Septin-type G domain maps to 39–305 (QGFCFNILCV…ELYRRCKLEE (267 aa)). Residues 49–56 (GETGLGKS) form a G1 motif region. GTP-binding positions include 49-56 (GETGLGKS), G104, 185-193 (KSDAISKSE), G239, and R254. The segment at 101–104 (STVG) is G3 motif. The interval 184–187 (AKSD) is G4 motif. The stretch at 321–416 (QETYEAKRNE…QSQGSQAGGS (96 aa)) forms a coiled coil. N6-acetyllysine is present on K367. Positions 405 to 427 (LLQSQGSQAGGSQTLKRDKEKKN) are disordered. Residues 407-417 (QSQGSQAGGSQ) show a composition bias toward low complexity. Position 416 is a phosphoserine (S416). Position 418 is a phosphothreonine (T418).

It belongs to the TRAFAC class TrmE-Era-EngA-EngB-Septin-like GTPase superfamily. Septin GTPase family. As to quaternary structure, septins polymerize into heterooligomeric protein complexes that form filaments, and associate with cellular membranes, actin filaments and microtubules. GTPase activity is required for filament formation. Filaments are assembled from asymmetrical heterotrimers, composed of SEPTIN2, SEPTIN6 and SEPTIN7 that associate head-to-head to form a hexameric unit. Within the trimer, directly interacts with SEPTIN2 and SEPTIN7. Also interacts with SEPTIN9 and SEPTIN12. Interaction with SEPTIN12 alters filament structure. Component of a septin core octameric complex consisting of SEPTIN12, SEPTIN7, SEPTIN6 and SEPTIN2 or SEPTIN4 in the order 12-7-6-2-2-6-7-12 or 12-7-6-4-4-6-7-12 and located in the sperm annulus. Interacts with SOCS7. Interacts with HNRNPA1.

It is found in the cytoplasm. It localises to the cytoskeleton. The protein resides in the spindle. Its subcellular location is the chromosome. The protein localises to the centromere. It is found in the kinetochore. It localises to the cleavage furrow. The protein resides in the midbody. Its subcellular location is the cell projection. The protein localises to the cilium. It is found in the flagellum. Filament-forming cytoskeletal GTPase. Required for normal organization of the actin cytoskeleton. Involved in cytokinesis. Forms a filamentous structure with SEPTIN12, SEPTIN6, SEPTIN2 and probably SEPTIN4 at the sperm annulus which is required for the structural integrity and motility of the sperm tail during postmeiotic differentiation. The polypeptide is Septin-6 (Bos taurus (Bovine)).